The following is a 2118-amino-acid chain: Cilia- and flagella-associated protein 65 (2118 aa).

A helical membrane pass occupies residues 6–26 (GSLRALLLAAAAAAAAAAGAV). The MSP domain occupies 615–736 (FLHSNPEFGP…HTPRLTTDLP (122 aa)). Disordered stretches follow at residues 1007–1029 (APLL…LDAG), 1764–1909 (SGGS…DDFA), and 1924–1958 (AGGG…APPR). The segment covering 1825–1834 (GGAGGAPGGD) has biased composition (gly residues). A compositionally biased stretch (low complexity) spans 1840 to 1849 (RPGTPSMTAA). Residues 1850 to 1859 (AHHHHHHPRH) show a composition bias toward basic residues. Composition is skewed to low complexity over residues 1892–1902 (SISGAPDPDSA) and 1936–1949 (PGGS…ELAP). Residues 2016–2045 (AVRAAAEAARAEAEARAAAEAATKAAAEAE) adopt a coiled-coil conformation.

Belongs to the CFAP65 family.

It is found in the cell projection. Its subcellular location is the cilium. It localises to the flagellum membrane. The protein resides in the cytoplasm. In terms of biological role, may play a role in flagellar formation and mobility. The sequence is that of Cilia- and flagella-associated protein 65 from Chlamydomonas reinhardtii (Chlamydomonas smithii).